Reading from the N-terminus, the 213-residue chain is Glutamine amidotransferase-like class 1 domain-containing protein 1 (213 aa).

An N-terminal signal peptide occupies residues 1 to 20 (MTSKPTCLIVASAASAGVSA).

Belongs to the peptidase C56 family. In terms of assembly, homotetramer. Component of the FERRY complex.

Its subcellular location is the secreted. It is found in the early endosome. Component of the FERRY complex (Five-subunit Endosomal Rab5 and RNA/ribosome intermediary). The FERRY complex directly interacts with mRNAs and RAB5A, and functions as a RAB5A effector involved in the localization and the distribution of specific mRNAs most likely by mediating their endosomal transport. The complex recruits mRNAs and ribosomes to early endosomes through direct mRNA-interaction. The sequence is that of Glutamine amidotransferase-like class 1 domain-containing protein 1 from Danio rerio (Zebrafish).